A 459-amino-acid chain; its full sequence is tRNA modification GTPase MnmE (459 aa).

Positions 23, 86, and 125 each coordinate (6S)-5-formyl-5,6,7,8-tetrahydrofolate. In terms of domain architecture, TrmE-type G spans 221 to 380 (GLKTVIVGKP…LQDKIESMVY (160 aa)). Residue N231 coordinates K(+). GTP contacts are provided by residues 231 to 236 (NVGKSS), 250 to 256 (TDIPGTT), and 275 to 278 (DTAG). A Mg(2+)-binding site is contributed by S235. 3 residues coordinate K(+): T250, I252, and T255. Residue T256 participates in Mg(2+) binding. K459 is a binding site for (6S)-5-formyl-5,6,7,8-tetrahydrofolate.

This sequence belongs to the TRAFAC class TrmE-Era-EngA-EngB-Septin-like GTPase superfamily. TrmE GTPase family. As to quaternary structure, homodimer. Heterotetramer of two MnmE and two MnmG subunits. The cofactor is K(+).

The protein resides in the cytoplasm. In terms of biological role, exhibits a very high intrinsic GTPase hydrolysis rate. Involved in the addition of a carboxymethylaminomethyl (cmnm) group at the wobble position (U34) of certain tRNAs, forming tRNA-cmnm(5)s(2)U34. In Clostridioides difficile (strain 630) (Peptoclostridium difficile), this protein is tRNA modification GTPase MnmE.